Consider the following 122-residue polypeptide: Large ribosomal subunit protein uL14 (122 aa).

The protein belongs to the universal ribosomal protein uL14 family. As to quaternary structure, part of the 50S ribosomal subunit. Forms a cluster with proteins L3 and L19. In the 70S ribosome, L14 and L19 interact and together make contacts with the 16S rRNA in bridges B5 and B8.

Functionally, binds to 23S rRNA. Forms part of two intersubunit bridges in the 70S ribosome. In Vesicomyosocius okutanii subsp. Calyptogena okutanii (strain HA), this protein is Large ribosomal subunit protein uL14.